Reading from the N-terminus, the 540-residue chain is CUB domain-containing protein 2 (540 aa).

The first 24 residues, 1–24, serve as a signal peptide directing secretion; that stretch reads MLAELGACLLLAMVLLDSDPGTQA. Over 25–516 the chain is Extracellular; sequence MEGVKCGGVL…GTMVTQDTSD (492 aa). Disulfide bonds link Cys-30–Cys-56, Cys-83–Cys-106, Cys-145–Cys-171, Cys-198–Cys-218, Cys-257–Cys-283, and Cys-314–Cys-336. CUB domains lie at 30–143, 145–255, and 257–373; these read CGGV…YQKD, CGGV…YFSG, and CQEV…YIGV. N-linked (GlcNAc...) asparagine glycosylation occurs at Asn-40. Residue Asn-267 is glycosylated (N-linked (GlcNAc...) asparagine). Residues Asn-377, Asn-435, and Asn-436 are each glycosylated (N-linked (GlcNAc...) asparagine). A helical membrane pass occupies residues 517 to 537; that stretch reads IVFLGLCILAGVLMIIAIVVL. Residues 538 to 540 lie on the Cytoplasmic side of the membrane; it reads MLL.

It localises to the membrane. The sequence is that of CUB domain-containing protein 2 (Cdcp2) from Mus musculus (Mouse).